Reading from the N-terminus, the 552-residue chain is Membrane protein insertase YidC (552 aa).

The next 5 membrane-spanning stretches (helical) occupy residues 7–24 (VLWV…DNWQ), 364–384 (WGWA…PLSA), 434–454 (LPVV…LASV), 473–493 (PFFI…SLNP), and 508–528 (PIAF…YYVV).

It belongs to the OXA1/ALB3/YidC family. Type 1 subfamily. As to quaternary structure, interacts with the Sec translocase complex via SecD. Specifically interacts with transmembrane segments of nascent integral membrane proteins during membrane integration.

The protein localises to the cell inner membrane. Required for the insertion and/or proper folding and/or complex formation of integral membrane proteins into the membrane. Involved in integration of membrane proteins that insert both dependently and independently of the Sec translocase complex, as well as at least some lipoproteins. Aids folding of multispanning membrane proteins. This Burkholderia cenocepacia (strain HI2424) protein is Membrane protein insertase YidC.